Reading from the N-terminus, the 70-residue chain is DNA-directed RNA polymerase subunit omega (70 aa).

It belongs to the RNA polymerase subunit omega family. In terms of assembly, the RNAP catalytic core consists of 2 alpha, 1 beta, 1 beta' and 1 omega subunit. When a sigma factor is associated with the core the holoenzyme is formed, which can initiate transcription.

The catalysed reaction is RNA(n) + a ribonucleoside 5'-triphosphate = RNA(n+1) + diphosphate. Its function is as follows. Promotes RNA polymerase assembly. Latches the N- and C-terminal regions of the beta' subunit thereby facilitating its interaction with the beta and alpha subunits. The polypeptide is DNA-directed RNA polymerase subunit omega (Caldanaerobacter subterraneus subsp. tengcongensis (strain DSM 15242 / JCM 11007 / NBRC 100824 / MB4) (Thermoanaerobacter tengcongensis)).